Reading from the N-terminus, the 210-residue chain is MKNNQTNQIKKRKLPYQIDKFKVQKFHHFQPNPITNSIEPLLDGSNNNKNNNYKKLKKMNYISTTTITTTNNIDLNNLLPIENIKQLFNQLNSNREIMDTLFNQFLQLYNSINFQSPLSNLSLLPITNYSNNDNDYNSNNIISTNIEGNNNNKSFILPNLNEDLFLNIPDSLKDLTNEKSIQENITLPTLENDLHSPLNLIQQFDQIINK.

This is an uncharacterized protein from Dictyostelium discoideum (Social amoeba).